The primary structure comprises 583 residues: Cationic amino acid transporter 6, chloroplastic (583 aa).

A chloroplast-targeting transit peptide spans 1–50 (MEVQSSSNNGGHSSFSSLRVYLNSLSATPSRLSRRAISVSTSSDEMSRVR). Transmembrane regions (helical) follow at residues 63–83 (WYDL…FVTT), 91–111 (AGPS…LSAF), 132–152 (ITFG…DYVM), 186–206 (GFNE…VIIC), 216–236 (NMIM…MGFI), 255–275 (FFPF…LSYI), 294–314 (IPVG…LMAV), 347–367 (VVGI…MLGQ), 397–417 (ASTF…LNVL), 418–438 (LNLV…ALIF), 450–470 (WPTL…TLIW), 481–501 (FMLG…QCVV), 509–529 (LWGV…NIFL), and 541–561 (FGFF…HASS).

This sequence belongs to the amino acid-polyamine-organocation (APC) superfamily. Cationic amino acid transporter (CAT) (TC 2.A.3.3) family. In terms of tissue distribution, expressed in roots, stems, flowers, and leaves.

The protein localises to the plastid. It localises to the chloroplast membrane. Its function is as follows. Permease involved in the transport of the cationic neutral or acidic amino acids. The chain is Cationic amino acid transporter 6, chloroplastic (CAT6) from Arabidopsis thaliana (Mouse-ear cress).